The sequence spans 185 residues: Thiol:disulfide interchange protein DsbE (185 aa).

Residues 1 to 4 (MKRN) are Cytoplasmic-facing. A helical membrane pass occupies residues 5–25 (VLLLPLLIFLLIAAALLWQLA). Over 26–185 (RNAQGDDPTN…WDRYSREAAQ (160 aa)) the chain is Periplasmic. Residues 39–177 (ALTGKPVPAF…WESELKPLWD (139 aa)) form the Thioredoxin domain. Residues Cys-80 and Cys-83 are joined by a disulfide bond.

It belongs to the thioredoxin family. DsbE subfamily.

It localises to the cell inner membrane. Its function is as follows. Involved in disulfide bond formation. Catalyzes a late, reductive step in the assembly of periplasmic c-type cytochromes, probably the reduction of disulfide bonds of the apocytochrome c to allow covalent linkage with the heme. Possible subunit of a heme lyase. This Salmonella typhimurium (strain LT2 / SGSC1412 / ATCC 700720) protein is Thiol:disulfide interchange protein DsbE (dsbE1).